Reading from the N-terminus, the 375-residue chain is 23S rRNA (uracil(747)-C(5))-methyltransferase RlmC (375 aa).

[4Fe-4S] cluster contacts are provided by Cys-3, Cys-11, Cys-14, and Cys-87. Gln-212, Phe-241, Glu-262, and Asn-307 together coordinate S-adenosyl-L-methionine. The active-site Nucleophile is the Cys-334.

This sequence belongs to the class I-like SAM-binding methyltransferase superfamily. RNA M5U methyltransferase family. RlmC subfamily.

The enzyme catalyses uridine(747) in 23S rRNA + S-adenosyl-L-methionine = 5-methyluridine(747) in 23S rRNA + S-adenosyl-L-homocysteine + H(+). In terms of biological role, catalyzes the formation of 5-methyl-uridine at position 747 (m5U747) in 23S rRNA. The polypeptide is 23S rRNA (uracil(747)-C(5))-methyltransferase RlmC (Escherichia coli O7:K1 (strain IAI39 / ExPEC)).